The chain runs to 162 residues: MSKPLCSTGLRWLWLVVVVLIIDLGSKYLILQNFALGDTVSLFSSLNLHYARNYGAAFSFLADSGGWQRWFFAGIAIGICVILMVMMYRSKATQKLNNIAYALIIGGALGNLFDRLWHGFVVDMIDFYVGDWHFATFNLADSAICIGAALIVLEGFLPKKQA.

3 helical membrane passes run 12–32 (WLWL…LILQ), 70–90 (WFFA…MYRS), and 102–122 (ALII…GFVV). Catalysis depends on residues D123 and D141. Residues 137–157 (FNLADSAICIGAALIVLEGFL) traverse the membrane as a helical segment.

This sequence belongs to the peptidase A8 family.

The protein resides in the cell inner membrane. It carries out the reaction Release of signal peptides from bacterial membrane prolipoproteins. Hydrolyzes -Xaa-Yaa-Zaa-|-(S,diacylglyceryl)Cys-, in which Xaa is hydrophobic (preferably Leu), and Yaa (Ala or Ser) and Zaa (Gly or Ala) have small, neutral side chains.. Its pathway is protein modification; lipoprotein biosynthesis (signal peptide cleavage). In terms of biological role, this protein specifically catalyzes the removal of signal peptides from prolipoproteins. The chain is Lipoprotein signal peptidase from Citrobacter koseri (strain ATCC BAA-895 / CDC 4225-83 / SGSC4696).